We begin with the raw amino-acid sequence, 509 residues long: Scavenger receptor class B member 1 (509 aa).

The Cytoplasmic segment spans residues 1 to 11 (MGNLSRARRVT). Residues 12-32 (AALGFIGLLFAVLGIIMIVMV) form a helical membrane-spanning segment. Residues 33–440 (PSIIKQQVLK…YIQLVLMPKV (408 aa)) lie on the Extracellular side of the membrane. Residues asparagine 102, asparagine 108, asparagine 173, asparagine 212, asparagine 227, asparagine 255, asparagine 310, asparagine 330, and asparagine 383 are each glycosylated (N-linked (GlcNAc...) asparagine). Cysteine 251 and cysteine 384 are oxidised to a cystine. The helical transmembrane segment at 441–461 (LHYAQYVLLALGCVLLLIPII) threads the bilayer. Residues 462–509 (YQIRSQEKCYLFWISFKKGSKDKEAVQAYSEFLMTSAPKGTVLQEARL) lie on the Cytoplasmic side of the membrane.

Belongs to the CD36 family. N-glycosylated. In terms of processing, the six cysteines of the extracellular domain are all involved in intramolecular disulfide bonds.

The protein resides in the cell membrane. It localises to the membrane. Its subcellular location is the caveola. Its function is as follows. Receptor for different ligands such as phospholipids, cholesterol ester, lipoproteins, phosphatidylserine and apoptotic cells. Receptor for HDL, mediating selective uptake of cholesteryl ether and HDL-dependent cholesterol efflux. Also facilitates the flux of free and esterified cholesterol between the cell surface and apoB-containing lipoproteins and modified lipoproteins, although less efficiently than HDL. May be involved in the phagocytosis of apoptotic cells, via its phosphatidylserine binding activity. The sequence is that of Scavenger receptor class B member 1 (SCARB1) from Bos taurus (Bovine).